A 1077-amino-acid chain; its full sequence is TSC22 domain family protein 1 (1077 aa).

Residues 1–98 form a required for interaction with TGFBR1 and promotion of TGF-beta signaling region; that stretch reads MHQPPESTAA…SQAQLQGQPL (98 aa). 5 disordered regions span residues 22-112, 125-283, 458-492, 842-874, and 909-947; these read MAHP…SGFQ, ISSN…VPSS, QTPT…SVGS, SSAA…GSLV, and QAIG…SDGS. Over residues 58–70 the composition is skewed to pro residues; sequence FPPPSLLQPPPPA. A compositionally biased stretch (low complexity) spans 84–96; the sequence is SLNLLSQAQLQGQ. A compositionally biased stretch (acidic residues) spans 133–142; the sequence is EDTESYDDLD. Basic residues predominate over residues 216 to 240; the sequence is HPHHLHHHHHPHHGHHLHHGHHHSS. A Phosphoserine modification is found at Ser263. A compositionally biased stretch (low complexity) spans 471–489; it reads TSGSSVSSSVSTLSHYTES. A compositionally biased stretch (polar residues) spans 852-874; the sequence is VPTNLVPPQNIAQPPATQNGSLV. Residues 933 to 947 are compositionally biased toward low complexity; it reads MSGDSGGMSAVSDGS. The tract at residues 1010–1031 is leucine-zipper; that stretch reads LKEQIKELIEKNSQLEQENNLL. The segment at 1042 to 1077 is disordered; sequence QFQAQLQTGSPPATTQPQGTTQPPAQPASQGSGSTA. Over residues 1048–1077 the composition is skewed to low complexity; the sequence is QTGSPPATTQPQGTTQPPAQPASQGSGSTA.

The protein belongs to the TSC-22/Dip/Bun family. In terms of assembly, forms homodimers. Forms heterodimers. Component of a complex composed of TSC22D1 (via N-terminus), TGFBR1 and TGFBR2; the interaction between TSC22D1 and TGFBR1 is inhibited by SMAD7 and promoted by TGFB1. Interacts with SMAD7; the interaction requires TGF-beta and the interaction is inhibited by TGFBR1. Interacts with TPT1/fortilin; interaction results in the destabilization of TSC22D1 protein and prevents TSC22D1-mediated apoptosis. Interacts with SMAD4 (via N-terminus). Interacts with ACVRL1/ALK1, ACVR1/ALK2, BMPR1A/ALK3, ACVR1B/ALK4, BMPR1B/ALK6, ACVR2A/ACTRII, and BMPR2. Interacts with SMAD6. Interacts with TFE3; the interaction is enhanced in the presence of TGF-beta. Forms a heterodimer with TSC22D4/THG1. As to quaternary structure, forms a heterodimer with TSC22D4/THG1. Interacts with histone H1-2. Interacts with GNL3. Expressed in bone marrow cells (at protein level). Expressed in T-cells. Expressed in the brain. As to expression, expressed in the myoepithelial cells of the mammary gland ducts and alveoli, expression is consistent throughout pregnancy, lactation and involution (at protein level). Expressed in the cortex, medulla and papilla of the kidney. In terms of tissue distribution, expressed in the myoepithelial cells of the mammary gland, expression significantly increases in the secretory luminal epithelium of the mammary gland at the initiation of involution, with levels decreasing from day 3 of involution onwards (at protein level). Expressed in the cortex, medulla and papilla of the kidney.

The protein localises to the cytoplasm. It localises to the nucleus. The protein resides in the cell membrane. It is found in the mitochondrion. Its function is as follows. Transcriptional repressor. Acts on the C-type natriuretic peptide (CNP) promoter. Acts to promote CASP3-mediated apoptosis. Positively regulates TGF-beta signaling by interacting with SMAD7 which inhibits binding of SMAD7 to TGFBR1, preventing recruitment of SMURF ubiquitin ligases to TGFBR1 and inhibiting SMURF-mediated ubiquitination and degradation of TGFBR1. Contributes to enhancement of TGF-beta signaling by binding to and modulating the transcription activator activity of SMAD4. Promotes TGF-beta-induced transcription of COL1A2; via its interaction with TFE3 at E-boxes in the gene proximal promoter. Plays a role in the repression of hematopoietic precursor cell growth. Promotes IL2 deprivation-induced apoptosis in T-lymphocytes, via repression of TSC22D3/GILZ transcription and activation of the caspase cascade. In terms of biological role, may act to negatively regulate TGFB3 signaling and thereby inhibit cell death in mammary gland cells. Positively regulates cell death in response to TGFB3 during mammary gland involution. This is TSC22 domain family protein 1 from Mus musculus (Mouse).